Here is a 156-residue protein sequence, read N- to C-terminus: RNA polymerase sigma factor SigS (156 aa).

The Polymerase core binding signature appears at 29-44; it reads EYYQLLLIKMWQLSQI. Residues 126-145 constitute a DNA-binding region (H-T-H motif); it reads QFEIAEIMSLSLSTIKLIKM.

It belongs to the sigma-70 factor family.

Sigma factors are initiation factors that promote the attachment of RNA polymerase to specific initiation sites and are then released. Sigma-S contributes to the protection against external stress, thus playing a role in cellular fitness and survival. This is RNA polymerase sigma factor SigS (sigS) from Staphylococcus aureus (strain COL).